The primary structure comprises 413 residues: Argininosuccinate synthase (413 aa).

ATP is bound by residues 14-22 and alanine 41; that span reads AYSGGLDTS. L-citrulline-binding residues include tyrosine 94 and serine 99. Glycine 124 is an ATP binding site. Positions 126, 130, and 131 each coordinate L-aspartate. Residue asparagine 130 coordinates L-citrulline. L-citrulline contacts are provided by arginine 134, serine 185, serine 194, glutamate 270, and tyrosine 282.

Belongs to the argininosuccinate synthase family. Type 1 subfamily. Homotetramer.

The protein resides in the cytoplasm. The enzyme catalyses L-citrulline + L-aspartate + ATP = 2-(N(omega)-L-arginino)succinate + AMP + diphosphate + H(+). The protein operates within amino-acid biosynthesis; L-arginine biosynthesis; L-arginine from L-ornithine and carbamoyl phosphate: step 2/3. The sequence is that of Argininosuccinate synthase from Hyphomonas neptunium (strain ATCC 15444).